A 219-amino-acid polypeptide reads, in one-letter code: Cytidylate kinase (219 aa).

Residue 21 to 29 (GPAASGKGT) participates in ATP binding.

Belongs to the cytidylate kinase family. Type 1 subfamily.

It is found in the cytoplasm. It carries out the reaction CMP + ATP = CDP + ADP. The catalysed reaction is dCMP + ATP = dCDP + ADP. The sequence is that of Cytidylate kinase from Rickettsia rickettsii (strain Iowa).